A 415-amino-acid chain; its full sequence is MAIKKRSATVVPGASGAAAAVKNPQASKSSFWGELPQHVMSGISRMVPTLIMGGVILAFSQLIAYSWLKIPAEIGIMDALNSGKFSGFDLSLLKFAWLSQSFGGVLFGFAIPMFAAFVANSIGGKLAFPAGFIGGLMSTQPTQLLNFDPSTMQWATSSPVPSTFIGALIISIVAGYLVKWMNQKIQLPDFLLAFKTTFLLPILSAIFVMLAMYYVITPFGGWINGGIRTVLTAAGEKGALMYAMGIAAATAIDLGGPINKAAGFVAFSFTTDHVLPVTARSIAIVIPPIGLGLATIIDRRLTGKRLFNAQLYPQGKTAMFLAFMGISEGAIPFALESPITAIPSYMVGAIVGSTAAVWLGAVQWFPESAIWAWPLVTNLGVYMAGIALGAVITALMVVFLRLMMFRKGKLLIDSL.

Topologically, residues 1–46 (MAIKKRSATVVPGASGAAAAVKNPQASKSSFWGELPQHVMSGISRM) are cytoplasmic. One can recognise a PTS EIIC type-2 domain in the interval 35–410 (LPQHVMSGIS…RLMMFRKGKL (376 aa)). Residues 47 to 67 (VPTLIMGGVILAFSQLIAYSW) form a helical membrane-spanning segment. Residues 68-101 (LKIPAEIGIMDALNSGKFSGFDLSLLKFAWLSQS) lie on the Periplasmic side of the membrane. Residues 102–122 (FGGVLFGFAIPMFAAFVANSI) traverse the membrane as a helical segment. Residues 123–126 (GGKL) lie on the Cytoplasmic side of the membrane. Residues 127-147 (AFPAGFIGGLMSTQPTQLLNF) form a helical membrane-spanning segment. Residues 148–157 (DPSTMQWATS) are Periplasmic-facing. A helical transmembrane segment spans residues 158–178 (SPVPSTFIGALIISIVAGYLV). Over 179-197 (KWMNQKIQLPDFLLAFKTT) the chain is Cytoplasmic. Residues 198 to 218 (FLLPILSAIFVMLAMYYVITP) form a helical membrane-spanning segment. Topologically, residues 219 to 237 (FGGWINGGIRTVLTAAGEK) are periplasmic. The helical transmembrane segment at 238–258 (GALMYAMGIAAATAIDLGGPI) threads the bilayer. Topologically, residues 259–276 (NKAAGFVAFSFTTDHVLP) are cytoplasmic. The chain crosses the membrane as a helical span at residues 277–297 (VTARSIAIVIPPIGLGLATII). Over 298-318 (DRRLTGKRLFNAQLYPQGKTA) the chain is Periplasmic. A helical transmembrane segment spans residues 319–339 (MFLAFMGISEGAIPFALESPI). The Cytoplasmic segment spans residues 340–341 (TA). The chain crosses the membrane as a helical span at residues 342–362 (IPSYMVGAIVGSTAAVWLGAV). The Periplasmic segment spans residues 363–378 (QWFPESAIWAWPLVTN). Residues 379–399 (LGVYMAGIALGAVITALMVVF) form a helical membrane-spanning segment. Over 400-415 (LRLMMFRKGKLLIDSL) the chain is Cytoplasmic.

Its subcellular location is the cell inner membrane. Functionally, the phosphoenolpyruvate-dependent sugar phosphotransferase system (PTS), a major carbohydrate active -transport system, catalyzes the phosphorylation of incoming sugar substrates concomitant with their translocation across the cell membrane. The protein is Fructose-like permease IIC component (fryC) of Escherichia coli O157:H7.